Here is a 380-residue protein sequence, read N- to C-terminus: Chaperone protein DnaJ (380 aa).

Residues 5-72 form the J domain; it reads DYYDTLGVPK…QKRAAYDQYG (68 aa). The tract at residues 21–47 is disordered; it reads IKKAYRKLAMKHHPDRNQGDTSKVSED. Residues 24–34 show a composition bias toward basic residues; that stretch reads AYRKLAMKHHP. Over residues 35 to 47 the composition is skewed to basic and acidic residues; the sequence is DRNQGDTSKVSED. The CR-type zinc-finger motif lies at 139-217; the sequence is GKEAQIRIPS…CHGVGKTKNN (79 aa). Zn(2+) is bound by residues C152, C155, C169, C172, C191, C194, C205, and C208. 4 CXXCXGXG motif repeats span residues 152-159, 169-176, 191-198, and 205-212; these read CGICHGTG, CTTCHGHG, CPQCKGSG, and CVACHGVG.

It belongs to the DnaJ family. Homodimer. Requires Zn(2+) as cofactor.

The protein resides in the cytoplasm. In terms of biological role, participates actively in the response to hyperosmotic and heat shock by preventing the aggregation of stress-denatured proteins and by disaggregating proteins, also in an autonomous, DnaK-independent fashion. Unfolded proteins bind initially to DnaJ; upon interaction with the DnaJ-bound protein, DnaK hydrolyzes its bound ATP, resulting in the formation of a stable complex. GrpE releases ADP from DnaK; ATP binding to DnaK triggers the release of the substrate protein, thus completing the reaction cycle. Several rounds of ATP-dependent interactions between DnaJ, DnaK and GrpE are required for fully efficient folding. Also involved, together with DnaK and GrpE, in the DNA replication of plasmids through activation of initiation proteins. The protein is Chaperone protein DnaJ of Polaromonas naphthalenivorans (strain CJ2).